We begin with the raw amino-acid sequence, 567 residues long: Amino-acid acetyltransferase, mitochondrial (567 aa).

The N-acetyltransferase domain maps to 392 to 558 (KDSPQTNPLH…ARLKEYAKHI (167 aa)).

It belongs to the acetyltransferase family.

The protein resides in the mitochondrion. It carries out the reaction L-glutamate + acetyl-CoA = N-acetyl-L-glutamate + CoA + H(+). The protein operates within amino-acid biosynthesis; L-arginine biosynthesis; N(2)-acetyl-L-ornithine from L-glutamate: step 1/4. Functionally, N-acetylglutamate synthase involved in arginine biosynthesis. This chain is Amino-acid acetyltransferase, mitochondrial (ARG2), found in Vanderwaltozyma polyspora (strain ATCC 22028 / DSM 70294 / BCRC 21397 / CBS 2163 / NBRC 10782 / NRRL Y-8283 / UCD 57-17) (Kluyveromyces polysporus).